Reading from the N-terminus, the 110-residue chain is Small ribosomal subunit protein eS25 (110 aa).

Residues 1-39 (MPPKAAGGKSKQIQASKAAAKGSSGGAGRKKWSKGRSRE) are disordered.

The protein belongs to the eukaryotic ribosomal protein eS25 family.

This chain is Small ribosomal subunit protein eS25 (rps25), found in Dictyostelium discoideum (Social amoeba).